Consider the following 470-residue polypeptide: 63 kDa sperm flagellar membrane protein (470 aa).

A signal peptide spans 1-25; sequence MFCHLHCMLVVFSLLLTLTGSFVNA. An EGF-like 1 domain is found at 41 to 80; the sequence is PPDPCASNPCTIASTHCVAAGESHTCECRPGYFETNGNCT. Disulfide bonds link Cys-45–Cys-57, Cys-50–Cys-66, and Cys-68–Cys-79. N-linked (GlcNAc...) asparagine glycans are attached at residues Asn-78, Asn-170, and Asn-219. The 125-residue stretch at 81–205 folds into the SEA domain; that stretch reads VAQQFAGSFS…STITVSDFDE (125 aa). The EGF-like 2; calcium-binding domain maps to 202 to 250; sequence DFDECASADDNDCDPNANCTNTAGSFTCECDTELYDNSPNTEEPGRVCI. 6 disulfide bridges follow: Cys-206-Cys-220, Cys-214-Cys-229, Cys-231-Cys-249, Cys-253-Cys-265, Cys-258-Cys-277, and Cys-279-Cys-291. The region spanning 249–292 is the EGF-like 3 domain; it reads CIAPCDPGLCTRPNEICNNGGTIEDDNLCKCIEGYDYTQYGDCD. The N-linked (GlcNAc...) asparagine glycan is linked to Asn-322. A lipid anchor (GPI-anchor amidated glycine) is attached at Gly-446. A propeptide spans 447–470 (removed in mature form); that stretch reads SQRHLPVCGVLSLVVTTLLALMLH.

In terms of tissue distribution, sperm.

The protein localises to the cell projection. It is found in the cilium. It localises to the flagellum membrane. In Strongylocentrotus purpuratus (Purple sea urchin), this protein is 63 kDa sperm flagellar membrane protein.